A 451-amino-acid polypeptide reads, in one-letter code: Gamma-aminobutyric acid receptor subunit alpha-2 (451 aa).

The N-terminal stretch at 1-28 is a signal peptide; that stretch reads MKTKLNIYNMQLLLFVFLVWDPARLVLA. Residues 29–249 are Extracellular-facing; sequence NIQEDEAKNN…MTAHFHLKRK (221 aa). N38 carries an N-linked (GlcNAc...) asparagine glycan. Residue R94 participates in 4-aminobutanoate binding. The N-linked (GlcNAc...) asparagine glycan is linked to N138. T157 provides a ligand contact to 4-aminobutanoate. Cysteines 166 and 180 form a disulfide. The helical transmembrane segment at 250 to 270 threads the bilayer; it reads IGYFVIQTYLPCIMTVILSQV. Topologically, residues 271 to 280 are cytoplasmic; sequence SFWLNRESVP. Residues 281–300 traverse the membrane as a helical segment; it reads ARTVFGVTTVLTMTTLSISA. Residues 301–311 are Extracellular-facing; it reads RNSLPKVAYAT. Residues 312-332 traverse the membrane as a helical segment; it reads AMDWFIAVCYAFVFSALIEFA. Over 333–420 the chain is Cytoplasmic; that stretch reads TVNYFTKRGW…FNSVSKIDRM (88 aa). A helical membrane pass occupies residues 421–441; sequence SRIVFPVLFGTFNLVYWATYL. Residues 442–451 lie on the Extracellular side of the membrane; sequence NREPVLGVSP.

It belongs to the ligand-gated ion channel (TC 1.A.9) family. Gamma-aminobutyric acid receptor (TC 1.A.9.5) subfamily. GABRA2 sub-subfamily. In terms of assembly, heteropentamer, formed by a combination of alpha (GABRA1-6), beta (GABRB1-3), gamma (GABRG1-3), delta (GABRD), epsilon (GABRE), rho (GABRR1-3), pi (GABRP) and theta (GABRQ) subunits, each subunit exhibiting distinct physiological and pharmacological properties. Interacts with UBQLN1. Interacts with KIF21B. Interacts with LHFPL4. Interacts with SHISA7; interaction leads to the regulation of GABA(A) receptor trafficking, channel deactivation kinetics and pharmacology. Glycosylated.

It is found in the postsynaptic cell membrane. Its subcellular location is the cell membrane. The protein resides in the cytoplasmic vesicle membrane. It localises to the cell projection. The protein localises to the dendrite. It carries out the reaction chloride(in) = chloride(out). Activated by pentobarbital. Inhibited by the antagonist bicuculline. In terms of biological role, alpha subunit of the heteropentameric ligand-gated chloride channel gated by gamma-aminobutyric acid (GABA), a major inhibitory neurotransmitter in the brain. GABA-gated chloride channels, also named GABA(A) receptors (GABAAR), consist of five subunits arranged around a central pore and contain GABA active binding site(s) located at the alpha and beta subunit interface(s). When activated by GABA, GABAARs selectively allow the flow of chloride anions across the cell membrane down their electrochemical gradient. Chloride influx into the postsynaptic neuron following GABAAR opening decreases the neuron ability to generate a new action potential, thereby reducing nerve transmission. The alpha-2 subunit exhibits synaptogenic activity together with beta-2 and very little to no activity together with beta-3, the gamma-2 subunit being necessary but not sufficient to induce rapid synaptic contacts formation. This chain is Gamma-aminobutyric acid receptor subunit alpha-2 (GABRA2), found in Pongo abelii (Sumatran orangutan).